Consider the following 260-residue polypeptide: UPF0246 protein Mmwyl1_3597 (260 aa).

This sequence belongs to the UPF0246 family.

In Marinomonas sp. (strain MWYL1), this protein is UPF0246 protein Mmwyl1_3597.